A 96-amino-acid chain; its full sequence is MELLDVIKRPVITEKSMLAMDEKKYTFEVDTRANKTLVKQAVESAFDVKVANVNILNVRPKFKRMGKYAGYTKKRRKAIVTLTEDSKEIQLFEAAE.

Belongs to the universal ribosomal protein uL23 family. As to quaternary structure, part of the 50S ribosomal subunit. Contacts protein L29, and trigger factor when it is bound to the ribosome.

One of the early assembly proteins it binds 23S rRNA. One of the proteins that surrounds the polypeptide exit tunnel on the outside of the ribosome. Forms the main docking site for trigger factor binding to the ribosome. The sequence is that of Large ribosomal subunit protein uL23 from Enterococcus faecalis (strain ATCC 700802 / V583).